The chain runs to 252 residues: Electron transfer flavoprotein subunit beta (252 aa).

It belongs to the ETF beta-subunit/FixA family. As to quaternary structure, heterodimer of an alpha and a beta subunit. It depends on AMP as a cofactor.

It is found in the cytoplasm. Its pathway is lipid metabolism; butanoate metabolism. Part of an electron transfer flavoprotein involved in syntrophic growth of S.wolfei with butyrate. Probably receives electrons from butyryl-CoA dehydrogenases, and transfers them to the membrane-bound quinone oxidoreductase Swol_0698. In Syntrophomonas wolfei subsp. wolfei (strain DSM 2245B / Goettingen), this protein is Electron transfer flavoprotein subunit beta.